We begin with the raw amino-acid sequence, 373 residues long: Ubiquitin carboxyl-terminal hydrolase 50 (373 aa).

The USP domain occupies 44–364 (TGLRNLGNTC…TAYLLFYSCQ (321 aa)). Residue C53 is the Nucleophile of the active site. H322 serves as the catalytic Proton acceptor.

This sequence belongs to the peptidase C19 family.

The protein resides in the cytoplasm. It localises to the cytoskeleton. It is found in the microtubule organizing center. The protein localises to the centrosome. Its subcellular location is the nucleus. It catalyses the reaction Thiol-dependent hydrolysis of ester, thioester, amide, peptide and isopeptide bonds formed by the C-terminal Gly of ubiquitin (a 76-residue protein attached to proteins as an intracellular targeting signal).. In terms of biological role, deubiquitinating enzyme that removes conjugated ubiquitin from specific proteins to regulate different cellular processes. Regulates the inflammasome signaling pathway by deubiquitinating 'Lys-63'-linked polyubiquitination of the PYCARD/ASC adapter protein. Regulates the ubiquitination and stability of the ACE2 protein. Acts as a negative regulator of the G2/M checkpoint pathway, by preventing serine/threonine kinase WEE1 degradation, thereby repressing entry into mitosis following activation of the G2/M DNA damage checkpoint. The protein is Ubiquitin carboxyl-terminal hydrolase 50 (USP50) of Macaca fascicularis (Crab-eating macaque).